Consider the following 308-residue polypeptide: Ribosome maturation factor RimP (308 aa).

Disordered regions lie at residues 1-31, 94-113, and 249-308; these read MARAGESGRAGVRRSTAPSRRTGGARAAADA, EDIGTDGAGGTGGSGGAAGG, and DLDE…EMNR. Low complexity predominate over residues 17 to 31; the sequence is APSRRTGGARAAADA. Residues 99 to 113 are compositionally biased toward gly residues; it reads DGAGGTGGSGGAAGG. Residues 249–269 are compositionally biased toward acidic residues; the sequence is DLDEGLEDDDGLEDEDDEDEY.

Belongs to the RimP family.

The protein localises to the cytoplasm. Its function is as follows. Required for maturation of 30S ribosomal subunits. In Parafrankia sp. (strain EAN1pec), this protein is Ribosome maturation factor RimP.